The primary structure comprises 438 residues: DNA polymerase IV 1 (438 aa).

The UmuC domain maps to 46 to 226; sequence LAHIDCDAFY…KPVTMIWGVG (181 aa). The Mg(2+) site is built by D50 and D143. Residue E144 is part of the active site.

Belongs to the DNA polymerase type-Y family. Monomer. Mg(2+) serves as cofactor.

It localises to the cytoplasm. The catalysed reaction is DNA(n) + a 2'-deoxyribonucleoside 5'-triphosphate = DNA(n+1) + diphosphate. In terms of biological role, poorly processive, error-prone DNA polymerase involved in untargeted mutagenesis. Copies undamaged DNA at stalled replication forks, which arise in vivo from mismatched or misaligned primer ends. These misaligned primers can be extended by PolIV. Exhibits no 3'-5' exonuclease (proofreading) activity. May be involved in translesional synthesis, in conjunction with the beta clamp from PolIII. This chain is DNA polymerase IV 1 (dinB1), found in Mesorhizobium japonicum (strain LMG 29417 / CECT 9101 / MAFF 303099) (Mesorhizobium loti (strain MAFF 303099)).